The primary structure comprises 508 residues: Light-independent protochlorophyllide reductase subunit B (508 aa).

Asp-36 contacts [4Fe-4S] cluster. The active-site Proton donor is the Asp-294. 429–430 (GM) is a substrate binding site.

Belongs to the ChlB/BchB/BchZ family. As to quaternary structure, protochlorophyllide reductase is composed of three subunits; ChlL, ChlN and ChlB. Forms a heterotetramer of two ChlB and two ChlN subunits. [4Fe-4S] cluster serves as cofactor.

The enzyme catalyses chlorophyllide a + oxidized 2[4Fe-4S]-[ferredoxin] + 2 ADP + 2 phosphate = protochlorophyllide a + reduced 2[4Fe-4S]-[ferredoxin] + 2 ATP + 2 H2O. Its pathway is porphyrin-containing compound metabolism; chlorophyll biosynthesis (light-independent). In terms of biological role, component of the dark-operative protochlorophyllide reductase (DPOR) that uses Mg-ATP and reduced ferredoxin to reduce ring D of protochlorophyllide (Pchlide) to form chlorophyllide a (Chlide). This reaction is light-independent. The NB-protein (ChlN-ChlB) is the catalytic component of the complex. This chain is Light-independent protochlorophyllide reductase subunit B, found in Picosynechococcus sp. (strain ATCC 27264 / PCC 7002 / PR-6) (Agmenellum quadruplicatum).